Consider the following 392-residue polypeptide: Bifunctional enzyme Fae/Hps (392 aa).

A formaldehyde-activating enzyme region spans residues 1-161; sequence MFQIGEALMG…EESNKSTHAI (161 aa). The Proton donor role is filled by His-17. Substrate is bound by residues Asp-19, Leu-48, Lys-66, Thr-68, and Gln-83. The 3-hexulose-6-phosphate synthase stretch occupies residues 162 to 392; that stretch reads MGFKVTRLWD…IDQFRVMTDF (231 aa).

In the N-terminal section; belongs to the formaldehyde-activating enzyme family. This sequence in the C-terminal section; belongs to the HPS/KGPDC family. HPS subfamily.

It catalyses the reaction 5,6,7,8-tetrahydromethanopterin + formaldehyde = 5,10-methylenetetrahydromethanopterin + H2O. The catalysed reaction is D-ribulose 5-phosphate + formaldehyde = D-arabino-hex-3-ulose 6-phosphate. It participates in carbohydrate biosynthesis; D-ribose 5-phosphate biosynthesis. In terms of biological role, catalyzes the condensation of formaldehyde with tetrahydromethanopterin (H(4)MPT) to 5,10-methylenetetrahydromethanopterin. Catalyzes the reversible formation of ribulose-5-phosphate and formaldehyde from 3-hexulose-6-phosphate. The chain is Bifunctional enzyme Fae/Hps from Methanosarcina mazei (strain ATCC BAA-159 / DSM 3647 / Goe1 / Go1 / JCM 11833 / OCM 88) (Methanosarcina frisia).